Consider the following 452-residue polypeptide: Exodeoxyribonuclease 7 large subunit (452 aa).

This sequence belongs to the XseA family. Heterooligomer composed of large and small subunits.

It localises to the cytoplasm. It catalyses the reaction Exonucleolytic cleavage in either 5'- to 3'- or 3'- to 5'-direction to yield nucleoside 5'-phosphates.. Its function is as follows. Bidirectionally degrades single-stranded DNA into large acid-insoluble oligonucleotides, which are then degraded further into small acid-soluble oligonucleotides. This Lysinibacillus sphaericus (strain C3-41) protein is Exodeoxyribonuclease 7 large subunit.